The primary structure comprises 267 residues: PHD finger protein ALFIN-LIKE 7 (267 aa).

Residues 162 to 207 (TKVSNGSSKSNKSNPKPSKQSNSNSKPAKPPQPKDEEDSGPEGAED) form a disordered region. Residues 165–188 (SNGSSKSNKSNPKPSKQSNSNSKP) show a composition bias toward low complexity. A compositionally biased stretch (acidic residues) spans 196–207 (DEEDSGPEGAED). Residues 211–263 (AYMCGACGETYANGEFWICCDVCEKWFHGKCVRITPAKAEHIKQYKCPGCSSK) form a PHD-type zinc finger.

It belongs to the Alfin family. As to quaternary structure, interacts with H3K4me3 and to a lesser extent with H3K4me2.

The protein resides in the nucleus. In terms of biological role, histone-binding component that specifically recognizes H3 tails trimethylated on 'Lys-4' (H3K4me3), which mark transcription start sites of virtually all active genes. The protein is PHD finger protein ALFIN-LIKE 7 of Oryza sativa subsp. indica (Rice).